The chain runs to 130 residues: Ribosome-binding factor A (130 aa).

Belongs to the RbfA family. As to quaternary structure, monomer. Binds 30S ribosomal subunits, but not 50S ribosomal subunits or 70S ribosomes.

The protein localises to the cytoplasm. In terms of biological role, one of several proteins that assist in the late maturation steps of the functional core of the 30S ribosomal subunit. Associates with free 30S ribosomal subunits (but not with 30S subunits that are part of 70S ribosomes or polysomes). Required for efficient processing of 16S rRNA. May interact with the 5'-terminal helix region of 16S rRNA. This is Ribosome-binding factor A from Flavobacterium psychrophilum (strain ATCC 49511 / DSM 21280 / CIP 103535 / JIP02/86).